A 518-amino-acid polypeptide reads, in one-letter code: MNELQTKVNEANNIFPVEAFKVPKVPEKLFGFVNQGFFPKLNPKGLNIADNVASLFEQYSLKQASLKDFDILLEKKNDIVLEHKVRYNFALQFHFETTYVGTGGEINLQFALQASTTNFSSLEELQASFSKTGDNLTAQLFWKPTVTKLVSGENDLTHIAQTAIGESLFDSRVDLSASIINSEATLKTAEATFTTQVLNPFKAEREKALAIKKAEEEKIKKELEEQKKRQEELSKQQRDKEALQKSLWNFQEFISYWTGQGKDVKQKEQFIQALEAAFSTNWNEVFNLLIAGFRSAIQTYYKDGKADQSQNAKIAFGEKGIQFPKSGPGLDGIFMSDFLRGNLTGNAHFDLKLKKVEVKNTQGKDAQGNDKKASINWQAKQNNFPFRQVNPWDFSFEVELKYEGSYGLYPGARFLNLFGSLGIPNDWKGEMSVKFVLDGKTPQWIADKPDYPGSLFKFEKNQLKFTPHVKEHVHVENKQFMEKLKSQNLHNLELATGATKPPVVDLASYLHYLILNHK.

It belongs to the MG032/MG096/MG288 family.

This is an uncharacterized protein from Mycoplasma pneumoniae (strain ATCC 29342 / M129 / Subtype 1) (Mycoplasmoides pneumoniae).